The primary structure comprises 909 residues: Coatomer subunit beta'-3 (909 aa).

9 WD repeats span residues 13–52, 55–94, 97–136, 140–180, 183–224, 227–266, 269–309, 351–390, and 461–501; these read QRSE…ITKS, VTEL…KVKV, AHSD…ACTQ, GHSH…PNFT, AHQK…CVQT, GHTH…LENT, YGLE…ASMD, TCDL…RSFG, and QIDV…SHFD. Residues 862-909 are disordered; that stretch reads EENGHVENEGDEEEQQEEEVNEEEGVVDADSTDGAVLVNGSEVLTPHP. The segment covering 870–892 has biased composition (acidic residues); it reads EGDEEEQQEEEVNEEEGVVDADS.

It belongs to the WD repeat COPB2 family. In terms of assembly, oligomeric complex that consists of at least the alpha, beta, beta', gamma, delta, epsilon and zeta subunits.

It is found in the cytoplasm. The protein resides in the golgi apparatus membrane. It localises to the cytoplasmic vesicle. The protein localises to the COPI-coated vesicle membrane. Its function is as follows. The coatomer is a cytosolic protein complex that binds to dilysine motifs and reversibly associates with Golgi non-clathrin-coated vesicles, which further mediate biosynthetic protein transport from the ER, via the Golgi up to the trans Golgi network. Coatomer complex is required for budding from Golgi membranes, and is essential for the retrograde Golgi-to-ER transport of dilysine-tagged proteins. The chain is Coatomer subunit beta'-3 from Arabidopsis thaliana (Mouse-ear cress).